The chain runs to 437 residues: O-methyltransferase 10 (437 aa).

4 residues coordinate S-adenosyl-L-methionine: Gly-259, Glu-282, Asn-315, and Met-316. Catalysis depends on His-335, which acts as the Proton acceptor.

The protein belongs to the class I-like SAM-binding methyltransferase superfamily. Cation-independent O-methyltransferase family. COMT subfamily.

It carries out the reaction (3,5-dichloro-2,4,6-trihydroxyphenyl)hexan-1-one + S-adenosyl-L-methionine = 1-(3,5-dichloro-2,6-dihydroxy-4-methoxyphenyl)hexan-1-one + S-adenosyl-L-homocysteine + H(+). The protein is O-methyltransferase 10 (omt10) of Dictyostelium discoideum (Social amoeba).